The primary structure comprises 244 residues: Ribosomal RNA small subunit methyltransferase NEP1 (244 aa).

The segment at 1 to 34 (MAAPSDGFKPRERSGGEQAQDWDALPPKRPRLGA) is disordered. The residue at position 2 (A2) is an N-acetylalanine. A phosphoserine mark is found at S5 and S14. S-adenosyl-L-methionine is bound by residues T176, G201, G206, and 219–224 (ISNYPL).

This sequence belongs to the class IV-like SAM-binding methyltransferase superfamily. RNA methyltransferase NEP1 family. Homodimer. Part of the small subunit (SSU) processome, composed of more than 70 proteins and the RNA chaperone small nucleolar RNA (snoRNA) U3.

It localises to the nucleus. The protein resides in the nucleolus. It catalyses the reaction pseudouridine(1248) in human 18S rRNA + S-adenosyl-L-methionine = N(1)-methylpseudouridine(1248) in human 18S rRNA + S-adenosyl-L-homocysteine + H(+). In terms of biological role, S-adenosyl-L-methionine-dependent pseudouridine N(1)-methyltransferase that methylates pseudouridine at position 1248 (Psi1248) in 18S rRNA. Involved the biosynthesis of the hypermodified N1-methyl-N3-(3-amino-3-carboxypropyl) pseudouridine (m1acp3-Psi) conserved in eukaryotic 18S rRNA. Is not able to methylate uridine at this position. Also has an essential role in 40S ribosomal subunit biogenesis independent on its methyltransferase activity, facilitating the incorporation of ribosomal protein S19 during the formation of pre-ribosomes. Part of the small subunit (SSU) processome, first precursor of the small eukaryotic ribosomal subunit. During the assembly of the SSU processome in the nucleolus, many ribosome biogenesis factors, an RNA chaperone and ribosomal proteins associate with the nascent pre-rRNA and work in concert to generate RNA folding, modifications, rearrangements and cleavage as well as targeted degradation of pre-ribosomal RNA by the RNA exosome. This Homo sapiens (Human) protein is Ribosomal RNA small subunit methyltransferase NEP1.